The sequence spans 464 residues: MGVVEGLLALALVLSACVMCNGGSSSPFIRKVEKTVDMPLDSDVFAVPPGYNAPQQVHITQGDLVGKAVIVSWVTVDEPGSSEVHYWSENSDKKKIAEGKLVTYRFFNYSSGFIHHTTIRNLEYKTKYYYEVGLGNTTRQFWFVTPPEIGPDVPYTFGLIGDLGQSFDSNKTLSHYELNPRKGQTVLFVGDLSYADNYPNHDNIRWDSWGRFTERSVAYQPWIWTAGNHENHFAPEIGETVPFKPYTHRYHVPYKASQSTSPFWYSIKRASAHIIVLASYSAYGKYTPQYKWLEKELPKVNRTETPWLIVLMHSPWYNSYNYHYMEGETMRVMYEPWFVQYKVDVVFAGHVHAYERSERVSNVAYNIVNGLCAPVNDKSAPVYITIGDGGTLEGLATNMTEPQPKYSAFREASFGHAIFDITNRTHAHYSWHRNQDGVAVEADSLWSFNRYWHPVDDSTAHVSH.

The first 30 residues, 1 to 30, serve as a signal peptide directing secretion; that stretch reads MGVVEGLLALALVLSACVMCNGGSSSPFIR. N108 and N136 each carry an N-linked (GlcNAc...) asparagine glycan. Fe cation is bound at residue D162. N-linked (GlcNAc...) asparagine glycosylation is present at N170. Residues D191 and Y194 each coordinate Fe cation. D191 contributes to the Zn(2+) binding site. Residue N228 participates in Zn(2+) binding. N228 serves as a coordination point for substrate. The N-linked (GlcNAc...) asparagine glycan is linked to N301. H313 is a binding site for Zn(2+). H323 functions as the Proton donor in the catalytic mechanism. H350 serves as a coordination point for Zn(2+). 350-352 serves as a coordination point for substrate; that stretch reads HVH. H352 provides a ligand contact to Fe cation. N-linked (GlcNAc...) asparagine glycosylation is found at N398 and N423.

The protein belongs to the metallophosphoesterase superfamily. Purple acid phosphatase family. Homodimer; disulfide-linked. It depends on Fe cation as a cofactor. The cofactor is Zn(2+). Mn(2+) serves as cofactor. Requires Cu(2+) as cofactor. Mg(2+) is required as a cofactor.

It is found in the secreted. It catalyses the reaction a phosphate monoester + H2O = an alcohol + phosphate. This chain is Purple acid phosphatase, found in Glycine max (Soybean).